Consider the following 947-residue polypeptide: Pyruvate, phosphate dikinase 1, chloroplastic (947 aa).

The transit peptide at 1-62 (MAASVSRAIC…GRGQHCSPLR (62 aa)) directs the protein to the chloroplast. Residues 21–54 (DREATSFARRSVAAPRPPHAKAAGVIRSDSGAGR) form a disordered region. Ala-63 carries the post-translational modification N-acetylalanine; partial. Position 309 is a phosphothreonine (Thr-309). The residue at position 506 (Ser-506) is a Phosphoserine. Thr-527 carries the post-translational modification Phosphothreonine; by PDRP1. Ser-528 carries the phosphoserine; by PDRP1 modification. His-529 functions as the Tele-phosphohistidine intermediate in the catalytic mechanism. The substrate site is built by Arg-635, Arg-692, Glu-821, Gly-842, Thr-843, Asn-844, and Asp-845. Glu-821 provides a ligand contact to Mg(2+). Residue Asp-845 coordinates Mg(2+). Catalysis depends on Cys-907, which acts as the Proton donor.

Belongs to the PEP-utilizing enzyme family. In terms of assembly, homotetramer. The cofactor is Mg(2+). Post-translationally, phosphorylation of Thr-527 in the dark inactivates the enzyme, dephosphorylation upon light stimulation reactivates the enzyme. More highly phosphorylated when grown under high rather than low light regimes (70 vs 900 umol photons/m-2/s). the degree of phosphorylation is strictly regulated by light intensity and the light/dark transition has no influence. Phosphorylated in both mesophyll and bundle sheath cells. The phosphorylation at Ser-528 may be important for the phosphorylation at Thr-527 and may also be regulated by light intensity. In terms of tissue distribution, isoform C4PPDKZM1 mainly localized in mesophyll cells and only a low level is found in bundle sheath cells. Isoform CYPPDKZM1 expressed in roots, stems and etiolated leaves.

Its subcellular location is the plastid. The protein localises to the chloroplast. It is found in the cytoplasm. It carries out the reaction pyruvate + phosphate + ATP = phosphoenolpyruvate + AMP + diphosphate + H(+). It participates in photosynthesis; C4 acid pathway. With respect to regulation, activated by light-induced dephosphorylation. Inhibited by dark-induced phosphorylation. Both reactions are catalyzed by PDRP1. Inactivated by cold due to the dissociation of the homotetramer. Independent of circadian regulation. Functionally, formation of phosphoenolpyruvate, which is the primary acceptor of CO(2) in C4 and some Crassulacean acid metabolism plants. This Zea mays (Maize) protein is Pyruvate, phosphate dikinase 1, chloroplastic.